The primary structure comprises 504 residues: Maturase K (504 aa).

It belongs to the intron maturase 2 family. MatK subfamily.

Its subcellular location is the plastid. It localises to the chloroplast. Usually encoded in the trnK tRNA gene intron. Probably assists in splicing its own and other chloroplast group II introns. This Lablab purpureus (Hyacinth bean) protein is Maturase K.